The primary structure comprises 154 residues: Myoglobin (154 aa).

The region spanning 2–148 (GLSDQEWQHV…FRNDMASKYK (147 aa)) is the Globin domain. His65 is a nitrite binding site. His65 is an O2 binding site. His94 is a binding site for heme b.

As to quaternary structure, monomeric.

It is found in the cytoplasm. The protein resides in the sarcoplasm. It catalyses the reaction Fe(III)-heme b-[protein] + nitric oxide + H2O = Fe(II)-heme b-[protein] + nitrite + 2 H(+). The catalysed reaction is H2O2 + AH2 = A + 2 H2O. In terms of biological role, monomeric heme protein which primary function is to store oxygen and facilitate its diffusion within muscle tissues. Reversibly binds oxygen through a pentacoordinated heme iron and enables its timely and efficient release as needed during periods of heightened demand. Depending on the oxidative conditions of tissues and cells, and in addition to its ability to bind oxygen, it also has a nitrite reductase activity whereby it regulates the production of bioactive nitric oxide. Under stress conditions, like hypoxia and anoxia, it also protects cells against reactive oxygen species thanks to its pseudoperoxidase activity. In Dromaius novaehollandiae (Emu), this protein is Myoglobin.